The sequence spans 557 residues: Membrane protein insertase YidC (557 aa).

A helical transmembrane segment spans residues 7-27 (ILLVALAVVSYLLVLQWNQDY). Residues 42 to 77 (ASPALPETVPGDSSTSADVPTAGSGNQVPDSAASTA) are disordered. Polar residues predominate over residues 52–77 (GDSSTSADVPTAGSGNQVPDSAASTA). The next 3 membrane-spanning stretches (helical) occupy residues 370 to 390 (WGWS…PLSA), 436 to 456 (LGGC…YWVL), and 514 to 534 (PIIF…YWVV).

The protein belongs to the OXA1/ALB3/YidC family. Type 1 subfamily. In terms of assembly, interacts with the Sec translocase complex via SecD. Specifically interacts with transmembrane segments of nascent integral membrane proteins during membrane integration.

The protein resides in the cell inner membrane. Functionally, required for the insertion and/or proper folding and/or complex formation of integral membrane proteins into the membrane. Involved in integration of membrane proteins that insert both dependently and independently of the Sec translocase complex, as well as at least some lipoproteins. Aids folding of multispanning membrane proteins. The chain is Membrane protein insertase YidC from Azotobacter vinelandii (strain DJ / ATCC BAA-1303).